Reading from the N-terminus, the 339-residue chain is MNDAAPDRQASVDFHLQALHPWLSRQDIAEICVNRPGQLWYEDRNGWNRQESGALTLDHLHALATATARFCDRDICPERPLLAASLPGGERVQIVVPPACEPGTLSLTIRKPARRIWPLSELLRDTLDLPGVPGASQARPDPLLDPWRRGAWDDFLRLAVQAGKAILVAGQTGSGKTTLMNALSGEIPPRERIVTIEDVRELRLDPATNHVHLLYGTPTEGRTAAVSATELLRAALRMAPTRILLAELRGGEAFDFLQACASGHSGGISTCHAASADMALQRLTLMCMQHPNCQMLPYSTLRALVESVIDIVVVVERRAGQGARRRVVDIWYRDGLPAP.

Belongs to the GSP E family.

The chain is Type IV secretion system protein PtlH homolog (ptlH) from Bordetella parapertussis (strain 12822 / ATCC BAA-587 / NCTC 13253).